Consider the following 90-residue polypeptide: UPF0237 protein PAE3582 (90 aa).

The ACT domain maps to 5-74 (VVSVLGADRV…LEEEGKRLGV (70 aa)).

It belongs to the UPF0237 family.

This Pyrobaculum aerophilum (strain ATCC 51768 / DSM 7523 / JCM 9630 / CIP 104966 / NBRC 100827 / IM2) protein is UPF0237 protein PAE3582.